A 298-amino-acid polypeptide reads, in one-letter code: ATP synthase gamma chain (298 aa).

This sequence belongs to the ATPase gamma chain family. As to quaternary structure, F-type ATPases have 2 components, CF(1) - the catalytic core - and CF(0) - the membrane proton channel. CF(1) has five subunits: alpha(3), beta(3), gamma(1), delta(1), epsilon(1). CF(0) has three main subunits: a, b and c.

It is found in the cell membrane. Functionally, produces ATP from ADP in the presence of a proton gradient across the membrane. The gamma chain is believed to be important in regulating ATPase activity and the flow of protons through the CF(0) complex. The polypeptide is ATP synthase gamma chain (Mycobacterium leprae (strain Br4923)).